The chain runs to 154 residues: Small ribosomal subunit protein uS13 (154 aa).

Belongs to the universal ribosomal protein uS13 family.

It localises to the cytoplasm. Functionally, located at the top of the head of the 40S subunit, it contacts several helices of the 18S rRNA. This Dictyostelium discoideum (Social amoeba) protein is Small ribosomal subunit protein uS13 (rps18).